A 357-amino-acid chain; its full sequence is Membrane-bound lytic murein transglycosylase C (357 aa).

The first 16 residues, 1 to 16 (MKKILPLVIIAPLLIS), serve as a signal peptide directing secretion. Cysteine 17 is lipidated: N-palmitoyl cysteine. Cysteine 17 carries the S-diacylglycerol cysteine lipid modification.

This sequence belongs to the transglycosylase Slt family.

It is found in the cell outer membrane. It catalyses the reaction Exolytic cleavage of the (1-&gt;4)-beta-glycosidic linkage between N-acetylmuramic acid (MurNAc) and N-acetylglucosamine (GlcNAc) residues in peptidoglycan, from either the reducing or the non-reducing ends of the peptidoglycan chains, with concomitant formation of a 1,6-anhydrobond in the MurNAc residue.. Its function is as follows. Murein-degrading enzyme. May play a role in recycling of muropeptides during cell elongation and/or cell division. The sequence is that of Membrane-bound lytic murein transglycosylase C from Sodalis glossinidius (strain morsitans).